A 175-amino-acid chain; its full sequence is Peptide deformylase 1 (175 aa).

Cys99 and His141 together coordinate Fe cation. Glu142 is an active-site residue. His145 provides a ligand contact to Fe cation.

The protein belongs to the polypeptide deformylase family. Fe(2+) is required as a cofactor.

The enzyme catalyses N-terminal N-formyl-L-methionyl-[peptide] + H2O = N-terminal L-methionyl-[peptide] + formate. Its function is as follows. Removes the formyl group from the N-terminal Met of newly synthesized proteins. Requires at least a dipeptide for an efficient rate of reaction. N-terminal L-methionine is a prerequisite for activity but the enzyme has broad specificity at other positions. The polypeptide is Peptide deformylase 1 (Rickettsia conorii (strain ATCC VR-613 / Malish 7)).